The chain runs to 1956 residues: Sodium channel protein type 10 subunit alpha (1956 aa).

Topologically, residues 1-125 (MELPFASVGT…FNLIRRTAIK (125 aa)) are cytoplasmic. Residues 31–54 (HRAAKKARTKHRGQEDKGEKPRPQ) are disordered. Basic residues predominate over residues 32–41 (RAAKKARTKH). The span at 42-54 (RGQEDKGEKPRPQ) shows a compositional bias: basic and acidic residues. One copy of the I repeat lies at 116–404 (FNLIRRTAIK…VTMAYEEQSQ (289 aa)). A helical membrane pass occupies residues 126 to 149 (VSVHSWFSIFITITILVNCVCMTR). Residues 150–154 (TDLPE) lie on the Extracellular side of the membrane. The chain crosses the membrane as a helical span at residues 155–174 (KVEYVFTVIYTFEALIKILA). Topologically, residues 175-187 (RGFCLNEFTYLRD) are cytoplasmic. Residues 188–206 (PWNWLDFSVITLAYVGAAI) traverse the membrane as a helical segment. Over 207-212 (DLRGIS) the chain is Extracellular. The chain crosses the membrane as a helical; Voltage-sensor span at residues 213–232 (GLRTFRVLRALKTVSVIPGL). Over 233 to 248 (KVIVGALIHSVRKLAD) the chain is Cytoplasmic. The helical transmembrane segment at 249 to 272 (VTILTVFCLSVFALVGLQLFKGNL) threads the bilayer. Topologically, residues 273-340 (KNKCIRNGTD…PDFNYTSFDS (68 aa)) are extracellular. Cys-276 and Cys-318 are joined by a disulfide. Asn-279, Asn-288, Asn-311, and Asn-334 each carry an N-linked (GlcNAc...) asparagine glycan. The pore-forming intramembrane region spans 341 to 365 (FAWAFLSLFRLMTQDSWERLYQQTL). At 366 to 372 (RASGKMY) the chain is on the extracellular side. A helical membrane pass occupies residues 373–398 (MVFFVLVIFLGSFYLVNLILAVVTMA). Residues 399 to 658 (YEEQSQATIA…KWRKFKMALF (260 aa)) lie on the Cytoplasmic side of the membrane. Ser-440, Ser-443, Ser-466, and Ser-478 each carry phosphoserine. Residues 441 to 453 (LQSHSGSPLASKN) show a composition bias toward polar residues. 2 disordered regions span residues 441-484 (LQSH…YNQR) and 537-581 (LLGR…AGAP). Over residues 475–484 (SPQSDPYNQR) the composition is skewed to polar residues. A phosphoserine mark is found at Ser-611 and Ser-614. An II repeat occupies 646–910 (CCPKWRKFKM…EDDGEVNNLQ (265 aa)). Residues 659-683 (ELVTDPFAELTITLCIVVNTVFMAM) traverse the membrane as a helical segment. The Extracellular portion of the chain corresponds to 684 to 694 (EHYPMTDAFDA). The chain crosses the membrane as a helical span at residues 695–718 (MLQAGNIVFTVFFTMEMAFKIIAF). Topologically, residues 719-726 (DPYYYFQK) are cytoplasmic. A helical membrane pass occupies residues 727–746 (KWNIFDCVIVTVSLLELSAS). Topologically, residues 747 to 752 (KKGSLS) are extracellular. Residues 753–772 (VLRTFRLLRVFKLAKSWPTL) traverse the membrane as a helical; Voltage-sensor segment. Residues 773-788 (NTLIKIIGNSVGALGN) are Cytoplasmic-facing. Residues 789-809 (LTFILAIIVFIFALVGKQLLS) form a helical membrane-spanning segment. At 810-833 (EDYGCRKDGVSVWNGEKLRWHMCD) the chain is on the extracellular side. An intramembrane region (pore-forming) is located at residues 834 to 854 (FFHSFLVVFRILCGEWIENMW). Residues 855–863 (VCMEVSQKS) lie on the Extracellular side of the membrane. A disulfide bond links Cys-856 and Cys-865. A helical membrane pass occupies residues 864-889 (ICLILFLTVMVLGNLVVLNLFIALLL). Over 890–1148 (NSFSADNLTA…GWQVRKTCYR (259 aa)) the chain is Cytoplasmic. A disordered region spans residues 1008–1094 (DELEEDMEQA…SEGSTVDCPD (87 aa)). One copy of the III repeat lies at 1141-1450 (QVRKTCYRIV…KKYYNAMKKL (310 aa)). A helical transmembrane segment spans residues 1149-1172 (IVEHSWFESFIIFMILLSSGALAF). Topologically, residues 1173-1185 (EDNYLEEKPRVKS) are extracellular. Residues 1186-1211 (VLEYTDRVFTFIFVFEMLLKWVAYGF) traverse the membrane as a helical segment. Topologically, residues 1212–1217 (KKYFTN) are cytoplasmic. The helical transmembrane segment at 1218–1239 (AWCWLDFLIVNISLTSLIAKIL) threads the bilayer. Topologically, residues 1240–1243 (EYSD) are extracellular. Residues 1244 to 1265 (VASIKALRTLRALRPLRALSRF) form a helical; Voltage-sensor membrane-spanning segment. The Cytoplasmic portion of the chain corresponds to 1266–1284 (EGMRVVVDALVGAIPSIMN). A helical membrane pass occupies residues 1285–1312 (VLLVCLIFWLIFSIMGVNLFAGKFSKCV). Topologically, residues 1313–1354 (DTRNNPFSNVNSTMVNNKSECHNQNSTGHFFWVNVKVNFDNV) are extracellular. Residues Asn-1323, Asn-1329, and Asn-1337 are each glycosylated (N-linked (GlcNAc...) asparagine). Residues 1355 to 1376 (AMGYLALLQVATFKGWMDIMYA) constitute an intramembrane region (pore-forming). Over 1377-1392 (AVDSGEINSQPNWENN) the chain is Extracellular. The helical transmembrane segment at 1393–1419 (LYMYLYFVVFIIFGGFFTLNLFVGVII) threads the bilayer. Residues 1420 to 1472 (DNFNQQKKKLGGQDIFMTEEQKKYYNAMKKLGSKKPQKPIPRPLNKYQGFVFD) lie on the Cytoplasmic side of the membrane. Ser-1452 carries the phosphoserine; by PKC modification. Residues 1459-1758 (IPRPLNKYQG…WEKFDPEATQ (300 aa)) form an IV repeat. Residues 1473 to 1496 (IVTRQAFDIIIMVLICLNMITMMV) form a helical membrane-spanning segment. Over 1497–1507 (ETDEQGEEKTK) the chain is Extracellular. Residues 1508–1531 (VLGRINQFFVAVFTGECVMKMFAL) traverse the membrane as a helical segment. The Cytoplasmic segment spans residues 1532–1537 (RQYYFT). Residues 1538 to 1561 (NGWNVFDFIVVILSIGSLLFSAIL) form a helical membrane-spanning segment. The Extracellular segment spans residues 1562–1573 (KSLENYFSPTLF). Residues 1574-1595 (RVIRLARIGRILRLIRAAKGIR) form a helical; Voltage-sensor membrane-spanning segment. Residues 1596 to 1610 (TLLFALMMSLPALFN) lie on the Cytoplasmic side of the membrane. The helical transmembrane segment at 1611–1633 (IGLLLFLVMFIYSIFGMASFANV) threads the bilayer. The Extracellular segment spans residues 1634–1647 (VDEAGIDDMFNFKT). Positions 1648 to 1670 (FGNSMLCLFQITTSAGWDGLLSP) form an intramembrane region, pore-forming. Residues 1671–1698 (ILNTGPPYCDPNLPNSNGSRGNCGSPAV) are Extracellular-facing. N-linked (GlcNAc...) asparagine glycosylation is present at Asn-1687. The helical transmembrane segment at 1699–1723 (GIIFFTTYIIISFLIVVNMYIAVIL) threads the bilayer. Over 1724-1956 (ENFNVATEES…AKEGNSPGPQ (233 aa)) the chain is Cytoplasmic. The 30-residue stretch at 1852 to 1881 (EDLSATVIQKAYRSYMLHRSLTLSNTLHVP) folds into the IQ domain. The segment at 1906 to 1956 (DKSETASATSFPPSYDSVTRGLSDRANINPSSSMQNEDEVAAKEGNSPGPQ) is disordered. Polar residues predominate over residues 1931–1940 (ANINPSSSMQ).

The protein belongs to the sodium channel (TC 1.A.1.10) family. Nav1.8/SCN10A subfamily. In terms of assembly, the channel consists of an ion conducting pore forming alpha-subunit regulated by one or more associated auxiliary subunits SCN1B, SCN2B and SCN3B; electrophysiological properties may vary depending on the type of the associated beta subunits. Found in a number of complexes with PRX, DYNLT1 and PDZD2. Interacts with proteins such as FSTL1, PRX, DYNLT1, PDZD2, S100A10 and many others. Interacts with NEDD4 and NEDD4L. Post-translationally, ubiquitinated by NEDD4L; which promotes its endocytosis. In terms of processing, phosphorylation at Ser-1452 by PKC in a highly conserved cytoplasmic loop slows inactivation of the sodium channel and reduces peak sodium currents. Lacks the cysteine which covalently binds the conotoxin GVIIJ. This cysteine (position 815) is speculated in other sodium channel subunits alpha to be implied in covalent binding with the sodium channel subunit beta-2 or beta-4. Expressed in dorsal root ganglia, trigeminal ganglia, nodose ganglia and sciatic nerve.

Its subcellular location is the cell membrane. The catalysed reaction is Na(+)(in) = Na(+)(out). Functionally, tetrodotoxin-resistant channel that mediates the voltage-dependent sodium ion permeability of excitable membranes. Assuming opened or closed conformations in response to the voltage difference across the membrane, the protein forms a sodium-selective channel through which sodium ions may pass in accordance with their electrochemical gradient. Plays a role in neuropathic pain mechanisms. The protein is Sodium channel protein type 10 subunit alpha of Rattus norvegicus (Rat).